Here is a 259-residue protein sequence, read N- to C-terminus: 5'-nucleotidase SurE (259 aa).

A divalent metal cation contacts are provided by D8, D9, S39, and N96.

Belongs to the SurE nucleotidase family. Requires a divalent metal cation as cofactor.

The protein resides in the cytoplasm. It carries out the reaction a ribonucleoside 5'-phosphate + H2O = a ribonucleoside + phosphate. Nucleotidase that shows phosphatase activity on nucleoside 5'-monophosphates. This is 5'-nucleotidase SurE from Pelotomaculum thermopropionicum (strain DSM 13744 / JCM 10971 / SI).